The chain runs to 144 residues: Large ribosomal subunit protein uL15 (144 aa).

Positions 1–58 (MRLNELAPEPGSRPSAKRVGRGIGSGLGKTGGRGHKGLKSRSGGSVAPGFEGGQQPLA) are disordered. The span at 21-31 (RGIGSGLGKTG) shows a compositional bias: gly residues.

It belongs to the universal ribosomal protein uL15 family. Part of the 50S ribosomal subunit.

Binds to the 23S rRNA. The polypeptide is Large ribosomal subunit protein uL15 (Marinobacter nauticus (strain ATCC 700491 / DSM 11845 / VT8) (Marinobacter aquaeolei)).